The following is a 456-amino-acid chain: UDP-N-acetylmuramoylalanine--D-glutamate ligase (456 aa).

ATP is bound at residue 122 to 128 (GSNGKST).

This sequence belongs to the MurCDEF family.

It localises to the cytoplasm. The enzyme catalyses UDP-N-acetyl-alpha-D-muramoyl-L-alanine + D-glutamate + ATP = UDP-N-acetyl-alpha-D-muramoyl-L-alanyl-D-glutamate + ADP + phosphate + H(+). The protein operates within cell wall biogenesis; peptidoglycan biosynthesis. In terms of biological role, cell wall formation. Catalyzes the addition of glutamate to the nucleotide precursor UDP-N-acetylmuramoyl-L-alanine (UMA). The polypeptide is UDP-N-acetylmuramoylalanine--D-glutamate ligase (Saccharophagus degradans (strain 2-40 / ATCC 43961 / DSM 17024)).